Reading from the N-terminus, the 193-residue chain is ATP synthase subunit b (193 aa).

The helical transmembrane segment at Pro24 to Trp44 threads the bilayer.

It belongs to the ATPase B chain family. F-type ATPases have 2 components, F(1) - the catalytic core - and F(0) - the membrane proton channel. F(1) has five subunits: alpha(3), beta(3), gamma(1), delta(1), epsilon(1). F(0) has three main subunits: a(1), b(2) and c(10-14). The alpha and beta chains form an alternating ring which encloses part of the gamma chain. F(1) is attached to F(0) by a central stalk formed by the gamma and epsilon chains, while a peripheral stalk is formed by the delta and b chains.

The protein resides in the cell membrane. F(1)F(0) ATP synthase produces ATP from ADP in the presence of a proton or sodium gradient. F-type ATPases consist of two structural domains, F(1) containing the extramembraneous catalytic core and F(0) containing the membrane proton channel, linked together by a central stalk and a peripheral stalk. During catalysis, ATP synthesis in the catalytic domain of F(1) is coupled via a rotary mechanism of the central stalk subunits to proton translocation. Functionally, component of the F(0) channel, it forms part of the peripheral stalk, linking F(1) to F(0). The chain is ATP synthase subunit b from Parafrankia sp. (strain EAN1pec).